A 90-amino-acid chain; its full sequence is Potassium channel toxin BmTXK-beta (90 aa).

The signal sequence occupies residues 1–22; it reads MMKQQFFLFLAVIVMISSVIEA. Positions 23–29 are excised as a propeptide; sequence GRGKEIM. Residues 55–90 form the BetaSPN-type CS-alpha/beta domain; the sequence is EYACPVIEKWCEDHCAAKKAIGKCEDTECKCLKLRK. 3 disulfides stabilise this stretch: C58–C78, C65–C83, and C69–C85.

Belongs to the long chain scorpion toxin family. Class 2 subfamily. Expressed by the venom gland.

Its subcellular location is the secreted. Functionally, this recombinant peptide reversibly and dose-dependently inhibits the transient outward potassium current (I(To)) of rabbit atrial myocyte and prolongs the action potential duration of rabbit atrial myocyte without affecting the action potential amplitude. Thus, the voltage-gated potassium channels Kv4.1/KCND1, Kv4.2/KCND2, Kv4.3/KCND3 may be the target of this toxin. This chain is Potassium channel toxin BmTXK-beta, found in Olivierus martensii (Manchurian scorpion).